A 598-amino-acid polypeptide reads, in one-letter code: Polypeptide N-acetylgalactosaminyltransferase 17 (598 aa).

Residues 1–6 (MASLRR) lie on the Cytoplasmic side of the membrane. Residues 7–27 (VKVLLVLNLIAVAGFVIFLAK) traverse the membrane as a helical; Signal-anchor for type II membrane protein segment. The Lumenal segment spans residues 28–598 (CRPIAVRSGD…QRWAIKNPIK (571 aa)). Asn-50 carries N-linked (GlcNAc...) asparagine glycosylation. 2 disulfide bridges follow: Cys-142–Cys-373 and Cys-364–Cys-443. Positions 151-262 (LPQISIIFIF…AGWAEPVLSR (112 aa)) are catalytic subdomain A. 2 residues coordinate substrate: Asp-192 and Arg-223. Positions 246, 248, and 378 each coordinate Mn(2+). The segment at 319–381 (PIRTPAMIGC…PCSRVAHIER (63 aa)) is catalytic subdomain B. The substrate site is built by Arg-381 and Tyr-386. N-linked (GlcNAc...) asparagine glycans are attached at residues Asn-461 and Asn-486. Positions 465-594 (AYGELRNNKA…SCTGQRWAIK (130 aa)) constitute a Ricin B-type lectin domain. Cystine bridges form between Cys-478-Cys-494, Cys-526-Cys-541, and Cys-568-Cys-586.

It belongs to the glycosyltransferase 2 family. GalNAc-T subfamily. The cofactor is Mn(2+).

It is found in the golgi apparatus membrane. The catalysed reaction is L-seryl-[protein] + UDP-N-acetyl-alpha-D-galactosamine = a 3-O-[N-acetyl-alpha-D-galactosaminyl]-L-seryl-[protein] + UDP + H(+). The enzyme catalyses L-threonyl-[protein] + UDP-N-acetyl-alpha-D-galactosamine = a 3-O-[N-acetyl-alpha-D-galactosaminyl]-L-threonyl-[protein] + UDP + H(+). It participates in protein modification; protein glycosylation. Its function is as follows. May catalyze the initial reaction in O-linked oligosaccharide biosynthesis, the transfer of an N-acetyl-D-galactosamine residue to a serine or threonine residue on the protein receptor. The protein is Polypeptide N-acetylgalactosaminyltransferase 17 of Mus musculus (Mouse).